Reading from the N-terminus, the 851-residue chain is Protein BCK2 (851 aa).

Positions 1 to 10 (MPKNSHHHRS) are enriched in basic residues. Disordered stretches follow at residues 1 to 91 (MPKN…RKKS), 233 to 271 (EVVP…MNTK), 315 to 355 (SLSL…LPEE), 466 to 504 (FLDG…YITT), and 698 to 722 (HASR…PNNV). The span at 11–23 (SSVNSTKSRSTES) shows a compositional bias: low complexity. The span at 37-66 (ASGSTQASPDRNSSTGSCSTPVLPTMNVMS) shows a compositional bias: polar residues. The segment covering 71–81 (VLLEDPRDNHT) has biased composition (basic and acidic residues). Polar residues-rich tracts occupy residues 254–271 (SETN…MNTK), 334–349 (SPRT…SQSK), 489–504 (ISDA…YITT), and 702–722 (SESN…PNNV). Ser-334 carries the phosphoserine modification. A phosphoserine mark is found at Ser-757 and Ser-761.

Its function is as follows. Dosage dependent suppressor of PKC1 deletion and MPK1 deletion. Involved in cell lysis. The protein is Protein BCK2 (BCK2) of Saccharomyces cerevisiae (strain ATCC 204508 / S288c) (Baker's yeast).